Here is a 387-residue protein sequence, read N- to C-terminus: Cysteine desulfurase IscS (387 aa).

Pyridoxal 5'-phosphate-binding positions include 73–74, N155, Q183, and 203–205; these read AT and SAH. K206 carries the N6-(pyridoxal phosphate)lysine modification. T241 contributes to the pyridoxal 5'-phosphate binding site. C328 acts as the Cysteine persulfide intermediate in catalysis. C328 is a binding site for [2Fe-2S] cluster.

The protein belongs to the class-V pyridoxal-phosphate-dependent aminotransferase family. NifS/IscS subfamily. As to quaternary structure, homodimer. Forms a heterotetramer with IscU, interacts with other sulfur acceptors. The cofactor is pyridoxal 5'-phosphate.

The protein localises to the cytoplasm. It catalyses the reaction (sulfur carrier)-H + L-cysteine = (sulfur carrier)-SH + L-alanine. The protein operates within cofactor biosynthesis; iron-sulfur cluster biosynthesis. Master enzyme that delivers sulfur to a number of partners involved in Fe-S cluster assembly, tRNA modification or cofactor biosynthesis. Catalyzes the removal of elemental sulfur atoms from cysteine to produce alanine. Functions as a sulfur delivery protein for Fe-S cluster synthesis onto IscU, an Fe-S scaffold assembly protein, as well as other S acceptor proteins. The sequence is that of Cysteine desulfurase IscS from Helicobacter pylori (strain P12).